The following is a 266-amino-acid chain: MKIGKFVIDGNAAIMGILNVTPDSFSDGGSYTTVQKVLQQVDQLIAGGAKIIDVGGESTRPGYQFVSAADEIERVVPMIKAIKAKYDVLISIDTYKTETARAALEAGADILNDVRAGLYDGEMLALAAEYDVPIILMHNQKEEVYQDVTQDVCDFLSARAQAAIDAGVPKDNIWIDPGFGFPKSVQHNMELLKGLDHVCQLGYPVLFGISRKGVVDALLGGNTKAKERDGATAALSAYALGKGCQLVRVHDVKANQEIVAVLSQLM.

In terms of domain architecture, Pterin-binding spans 12-260 (AAIMGILNVT…DVKANQEIVA (249 aa)). Asparagine 19 serves as a coordination point for Mg(2+). (7,8-dihydropterin-6-yl)methyl diphosphate is bound by residues threonine 59, aspartate 93, asparagine 112, aspartate 176, lysine 212, and 248–250 (RVH).

Belongs to the DHPS family. As to quaternary structure, homodimer or homotrimer. Requires Mg(2+) as cofactor.

It catalyses the reaction (7,8-dihydropterin-6-yl)methyl diphosphate + 4-aminobenzoate = 7,8-dihydropteroate + diphosphate. Its pathway is cofactor biosynthesis; tetrahydrofolate biosynthesis; 7,8-dihydrofolate from 2-amino-4-hydroxy-6-hydroxymethyl-7,8-dihydropteridine diphosphate and 4-aminobenzoate: step 1/2. Its function is as follows. Catalyzes the condensation of para-aminobenzoate (pABA) with 6-hydroxymethyl-7,8-dihydropterin diphosphate (DHPt-PP) to form 7,8-dihydropteroate (H2Pte), the immediate precursor of folate derivatives. The polypeptide is Dihydropteroate synthase (folP) (Streptococcus pyogenes).